A 467-amino-acid chain; its full sequence is Dimethylamine methyltransferase MtbB2 (467 aa).

Position 356 (O356) is a non-standard amino acid, pyrrolysine.

It belongs to the dimethylamine methyltransferase family.

It catalyses the reaction Co(I)-[dimethylamine-specific corrinoid protein] + dimethylamine + H(+) = methyl-Co(III)-[dimethylamine-specific corrinoid protein] + methylamine. The protein operates within one-carbon metabolism; methanogenesis from dimethylamine. Its function is as follows. Catalyzes the transfer of a methyl group from dimethylamine to the corrinoid cofactor of MtbC. This is Dimethylamine methyltransferase MtbB2 (mtbB2) from Methanosarcina barkeri (strain Fusaro / DSM 804).